We begin with the raw amino-acid sequence, 177 residues long: uncharacterized protein (177 aa).

Residues Leu-10–Glu-177 form the N-acetyltransferase domain.

Belongs to the acetyltransferase family.

This is an uncharacterized protein from Bacillus subtilis (strain 168).